Here is a 228-residue protein sequence, read N- to C-terminus: Ribose-5-phosphate isomerase A (228 aa).

Substrate is bound by residues 27 to 30 (TGTT), 86 to 89 (DGAD), and 100 to 103 (KGMG). E109 acts as the Proton acceptor in catalysis. Substrate is bound at residue K127.

It belongs to the ribose 5-phosphate isomerase family. In terms of assembly, homodimer.

It catalyses the reaction aldehydo-D-ribose 5-phosphate = D-ribulose 5-phosphate. It participates in carbohydrate degradation; pentose phosphate pathway; D-ribose 5-phosphate from D-ribulose 5-phosphate (non-oxidative stage): step 1/1. Catalyzes the reversible conversion of ribose-5-phosphate to ribulose 5-phosphate. This is Ribose-5-phosphate isomerase A from Borreliella burgdorferi (strain ZS7) (Borrelia burgdorferi).